The following is a 417-amino-acid chain: MTLSPEKQHVRPRDAADNDPVAVARGLAEKWRATAVERDRAGGSATAEREDLRASGLLSLLVPREYGGWGADWPTAIEVVREIAAADGSLGHLFGYHLTNAPMIELIGSQEQEEHLYTQIAQNNWWTGNASSENNSHVLDWKVSATPTEDGGYVLNGTKHFCSGAKGSDLLFVFGVVQDDSPQQGAIIAAAIPTSRAGVTPNDDWAAIGMRQTDSGSTDFHNVKVEPDEVLGAPNAFVLAFIQSERGSLFAPIAQLIFANVYLGIAHGALDAAREYTRTQARPWTPAGIQQATEDPYTIRSYGEFTIALQGADAAAREAAHLLQTVWDKGDALTPEDRGELMVKVSGVKALATNAALNISSGVFEVIGARGTHPRYGFDRFWRNVRTHSLHDPVSYKIADVGKHTLNGQYPIPGFTS.

Residues Tyr96, 129-134 (NASSEN), 159-163 (KHFCS), Arg282, 369-370 (AR), and His391 each bind FMN. Positions 131–142 (SSENNSHVLDWK) are lid loop.

Belongs to the DszC flavin monooxygenase family. In terms of assembly, homotetramer. Homodimer. Requires FAD as cofactor. NADH serves as cofactor.

It localises to the cytoplasm. It carries out the reaction dibenzothiophene + 2 FMNH2 + 2 O2 = dibenzothiophene 5,5-dioxide + 2 FMN + 2 H2O + 2 H(+). It catalyses the reaction dibenzothiophene + FMNH2 + O2 = dibenzothiophene 5-oxide + FMN + H2O + H(+). The catalysed reaction is dibenzothiophene 5-oxide + FMNH2 + O2 = dibenzothiophene 5,5-dioxide + FMN + H2O + H(+). It participates in sulfur metabolism; dibenzothiophene degradation. Catalyzes the first step of the '4S' desulfurization pathway that removes covalently bound sulfur from dibenzothiophene (DBT) without breaking carbon-carbon bonds. Sulfur dioxygenase which converts DBT to DBT-sulfone (DBTO2 or DBT 5,5-dioxide) in a stepwise manner. In DBTO (dibenzothiophene-5-oxide) was reported not to be a substrate, in it is reported to be a substrate. Can also use benzyl sulfide and benzyl sulfoxide as substrates, although benzyl sulfoxide is a poor substrate. The pathway substrate specificity has been augmented using mutagenesis, however no mutations allowed use of alkylated thiophenes. This is Dibenzothiophene monooxygenase from Rhodococcus qingshengii.